Reading from the N-terminus, the 335-residue chain is Beta-ketoacyl-[acyl-carrier-protein] synthase III (335 aa).

Residues C120 and H261 contribute to the active site. The segment at 262-266 is ACP-binding; it reads QANER. N291 is an active-site residue.

The protein belongs to the thiolase-like superfamily. FabH family. In terms of assembly, homodimer.

The protein resides in the cytoplasm. The catalysed reaction is malonyl-[ACP] + acetyl-CoA + H(+) = 3-oxobutanoyl-[ACP] + CO2 + CoA. The protein operates within lipid metabolism; fatty acid biosynthesis. Its function is as follows. Catalyzes the condensation reaction of fatty acid synthesis by the addition to an acyl acceptor of two carbons from malonyl-ACP. Catalyzes the first condensation reaction which initiates fatty acid synthesis and may therefore play a role in governing the total rate of fatty acid production. Possesses both acetoacetyl-ACP synthase and acetyl transacylase activities. Its substrate specificity determines the biosynthesis of branched-chain and/or straight-chain of fatty acids. This is Beta-ketoacyl-[acyl-carrier-protein] synthase III from Chlamydia pneumoniae (Chlamydophila pneumoniae).